The primary structure comprises 38 residues: Large ribosomal subunit protein bL36 (38 aa).

The protein belongs to the bacterial ribosomal protein bL36 family.

This chain is Large ribosomal subunit protein bL36, found in Alcanivorax borkumensis (strain ATCC 700651 / DSM 11573 / NCIMB 13689 / SK2).